Reading from the N-terminus, the 567-residue chain is MEADDDFYSGTENYSDYADSDEDDADGEYEFVDDAADDSDDLIFRRRQQNYSVLSEADICKLQEDDISRISTVLSISRNSSAILLRHYNWCVSRVHDEWFADEEKVRDAVGLLEKPVVDFPTDGELDCGICFETFLSDKLHAAACGHPFCDSCWEGYITTAINDGPGCLTLRCPDPSCRAAVGQDMINLLAPDKDKQKYTSYFVRSYVEDNRKTKWCPAPGCDYAVNFVVGSGNYDVNCRCCYSFCWNCAEEAHRPVDCDTVSKWVLKNSAESENMNWILANSKPCPKCKRPIEKNQGCMHITCTPPCKFEFCWLCLGAWTEHGEKTGGFYACNRYEAAKQDGIYDETEKRREMAKNSLERYTHYYERWATNQSSRQKALLDLKKMQTDDIEKLSDIQCQPESQLKFIIEAWLQIVECRRVLKWTYAYGFYIPDQEHGKRVFFEYLQGEAESGLERLHQCAEKELLPYLDAKGPSEDFNEFRTKLAGLTSVTKNYFENLVRALENGLSDVNSHDAYDRTSSSKSLGGKTKGSSSKASSSDSSHWPCEYCTYVNPRSTTICQMCEHGR.

The tract at residues 1 to 27 is disordered; sequence MEADDDFYSGTENYSDYADSDEDDADG. Residues 18–27 are compositionally biased toward acidic residues; the sequence is ADSDEDDADG. Residues 124–337 are TRIAD supradomain; it reads GELDCGICFE…GGFYACNRYE (214 aa). Zn(2+)-binding residues include C128, C131, C145, H147, C150, C153, C173, C178, C217, C222, C239, C241, C246, C249, H254, C259, C286, and C289. Residues 128–178 form an RING-type 1 zinc finger; sequence CGICFETFLSDKLHAAACGHPFCDSCWEGYITTAINDGPGCLTLRCPDPSC. The IBR-type zinc finger occupies 197 to 259; that stretch reads QKYTSYFVRS…AEEAHRPVDC (63 aa). The segment at 286–316 adopts an RING-type 2; atypical zinc-finger fold; the sequence is CPKCKRPIEKNQGCMHITCTPPCKFEFCWLC. C299 is a catalytic residue. Positions 304, 308, 313, 316, 323, and 333 each coordinate Zn(2+). The disordered stretch occupies residues 514–543; it reads DAYDRTSSSKSLGGKTKGSSSKASSSDSSH. Over residues 521–542 the composition is skewed to low complexity; sequence SSKSLGGKTKGSSSKASSSDSS. The segment at 540 to 567 adopts a RanBP2-type zinc-finger fold; that stretch reads DSSHWPCEYCTYVNPRSTTICQMCEHGR.

This sequence belongs to the RBR family. Ariadne subfamily. Zn(2+) serves as cofactor. As to expression, ubiquitous.

It carries out the reaction [E2 ubiquitin-conjugating enzyme]-S-ubiquitinyl-L-cysteine + [acceptor protein]-L-lysine = [E2 ubiquitin-conjugating enzyme]-L-cysteine + [acceptor protein]-N(6)-ubiquitinyl-L-lysine.. Its pathway is protein modification; protein ubiquitination. Its function is as follows. Might act as an E3 ubiquitin-protein ligase, or as part of E3 complex, which accepts ubiquitin from specific E2 ubiquitin-conjugating enzymes and then transfers it to substrates. The polypeptide is Probable E3 ubiquitin-protein ligase ARI8 (ARI8) (Arabidopsis thaliana (Mouse-ear cress)).